The sequence spans 113 residues: Crustacean hyperglycemic hormones B (113 aa).

The N-terminal stretch at 1–26 (MVAFRMMSMALLVVVASSWWASPVEA) is a signal peptide. Intrachain disulfides connect C46-C82, C62-C78, and C65-C91. V111 bears the Valine amide mark.

This sequence belongs to the arthropod CHH/MIH/GIH/VIH hormone family. In terms of tissue distribution, expressed at a constant level in the eyestalks of juveniles and mature females. A low level expression is seen in the central nervous system.

It is found in the secreted. Functionally, hormone found in the sinus gland of isopods and decapods which controls the blood sugar level. Has a secretagogue action over the amylase released from the midgut gland. May act as a stress hormone and may be involved in the control of molting and reproduction. The polypeptide is Crustacean hyperglycemic hormones B (Metapenaeus ensis (Greasyback shrimp)).